We begin with the raw amino-acid sequence, 339 residues long: Dihydroorotase (339 aa).

Zn(2+)-binding residues include H12 and H14. Substrate contacts are provided by residues 14–16 (HVR) and N40. Zn(2+)-binding residues include K94, H133, H167, and D239. K94 carries the N6-carboxylysine modification. H133 is a binding site for substrate. D239 is an active-site residue. The substrate site is built by H243 and A255.

It belongs to the metallo-dependent hydrolases superfamily. DHOase family. Class II DHOase subfamily. In terms of assembly, homodimer. It depends on Zn(2+) as a cofactor.

It carries out the reaction (S)-dihydroorotate + H2O = N-carbamoyl-L-aspartate + H(+). It functions in the pathway pyrimidine metabolism; UMP biosynthesis via de novo pathway; (S)-dihydroorotate from bicarbonate: step 3/3. Catalyzes the reversible cyclization of carbamoyl aspartate to dihydroorotate. The sequence is that of Dihydroorotase from Helicobacter pylori (strain P12).